The sequence spans 127 residues: uncharacterized protein (127 aa).

Transmembrane regions (helical) follow at residues 48 to 68 (LYSL…PLSI) and 83 to 103 (VFLF…CLID).

The protein localises to the membrane. This is an uncharacterized protein from Saccharomyces cerevisiae (strain ATCC 204508 / S288c) (Baker's yeast).